An 81-amino-acid chain; its full sequence is uncharacterized protein (81 aa).

The signal sequence occupies residues 1 to 24 (MRKILKIVSLLILLLLLVYSFFSP). Residues 25-28 (NSQL) are Extracellular-facing. The helical transmembrane segment at 29 to 49 (FVFVQLIIIAFLIGFGINCFV) threads the bilayer. At 50-81 (KKERYQGTLYFVIAICNITINLDKINELIQSI) the chain is on the cytoplasmic side.

It localises to the cell membrane. This is an uncharacterized protein from Bacillus subtilis (strain 168).